A 256-amino-acid chain; its full sequence is ATP synthase peripheral stalk subunit b, mitochondrial (256 aa).

The N-terminal 42 residues, 1–42, are a transit peptide targeting the mitochondrion; that stretch reads MLSRVVLSAAATAAPCLKNAAVLGPGVLQATRVFHTGQPRLA. Position 131 is an N6-succinyllysine (K131). An N6-acetyllysine mark is found at K139, K154, K162, K221, K233, and K244.

The protein belongs to the eukaryotic ATPase B chain family. Component of the ATP synthase complex composed at least of ATP5F1A/subunit alpha, ATP5F1B/subunit beta, ATP5MC1/subunit c (homooctomer), MT-ATP6/subunit a, MT-ATP8/subunit 8, ATP5ME/subunit e, ATP5MF/subunit f, ATP5MG/subunit g, ATP5MK/subunit k, ATP5MJ/subunit j, ATP5F1C/subunit gamma, ATP5F1D/subunit delta, ATP5F1E/subunit epsilon, ATP5PF/subunit F6, ATP5PB/subunit b, ATP5PD/subunit d, ATP5PO/subunit OSCP. ATP synthase complex consists of a soluble F(1) head domain (subunits alpha(3) and beta(3)) - the catalytic core - and a membrane F(0) domain - the membrane proton channel (subunits c, a, 8, e, f, g, k and j). These two domains are linked by a central stalk (subunits gamma, delta, and epsilon) rotating inside the F1 region and a stationary peripheral stalk (subunits F6, b, d, and OSCP).

It localises to the mitochondrion. Its subcellular location is the mitochondrion inner membrane. In terms of biological role, subunit b, of the mitochondrial membrane ATP synthase complex (F(1)F(0) ATP synthase or Complex V) that produces ATP from ADP in the presence of a proton gradient across the membrane which is generated by electron transport complexes of the respiratory chain. ATP synthase complex consist of a soluble F(1) head domain - the catalytic core - and a membrane F(1) domain - the membrane proton channel. These two domains are linked by a central stalk rotating inside the F(1) region and a stationary peripheral stalk. During catalysis, ATP synthesis in the catalytic domain of F(1) is coupled via a rotary mechanism of the central stalk subunits to proton translocation. In vivo, can only synthesize ATP although its ATP hydrolase activity can be activated artificially in vitro. Part of the complex F(0) domain. Part of the complex F(0) domain and the peripheric stalk, which acts as a stator to hold the catalytic alpha(3)beta(3) subcomplex and subunit a/ATP6 static relative to the rotary elements. In Rattus norvegicus (Rat), this protein is ATP synthase peripheral stalk subunit b, mitochondrial.